A 199-amino-acid polypeptide reads, in one-letter code: Protein-methionine-sulfoxide reductase heme-binding subunit MsrQ (199 aa).

Helical transmembrane passes span 10–30, 79–99, 118–138, 147–167, and 169–189; these read WLKV…ILSV, LLGL…SVLE, LTLG…STLW, WQKL…HYLW, and VKTL…LLAL.

This sequence belongs to the MsrQ family. In terms of assembly, heterodimer of a catalytic subunit (MsrP) and a heme-binding subunit (MsrQ). FMN is required as a cofactor. The cofactor is heme b.

The protein localises to the cell inner membrane. In terms of biological role, part of the MsrPQ system that repairs oxidized periplasmic proteins containing methionine sulfoxide residues (Met-O), using respiratory chain electrons. Thus protects these proteins from oxidative-stress damage caused by reactive species of oxygen and chlorine generated by the host defense mechanisms. MsrPQ is essential for the maintenance of envelope integrity under bleach stress, rescuing a wide series of structurally unrelated periplasmic proteins from methionine oxidation. MsrQ provides electrons for reduction to the reductase catalytic subunit MsrP, using the quinone pool of the respiratory chain. This chain is Protein-methionine-sulfoxide reductase heme-binding subunit MsrQ, found in Yersinia enterocolitica serotype O:8 / biotype 1B (strain NCTC 13174 / 8081).